Here is a 654-residue protein sequence, read N- to C-terminus: DNA-directed RNA polymerase III subunit RPC3 (654 aa).

Phosphothreonine is present on Thr-27. 2 disordered regions span residues 381–401 and 422–448; these read LSRK…ASLP and KSLQ…EDPH. Phosphoserine is present on residues Ser-392 and Ser-394. Residues 429–444 are compositionally biased toward acidic residues; it reads DTQEEDEEEEDLDADT. A leucine-zipper region spans residues 581–602; it reads LEWNMANLLFKKEKLKQENSTL.

It belongs to the eukaryotic RPC3/POLR3C RNA polymerase subunit family. As to quaternary structure, component of the RNA polymerase III (Pol III) complex consisting of 17 subunits.

It localises to the cytoplasm. The protein resides in the nucleus. Functionally, DNA-dependent RNA polymerase catalyzes the transcription of DNA into RNA using the four ribonucleoside triphosphates as substrates. Specific core component of RNA polymerase III which synthesizes small RNAs, such as 5S rRNA and tRNAs. In Saccharomyces cerevisiae (strain ATCC 204508 / S288c) (Baker's yeast), this protein is DNA-directed RNA polymerase III subunit RPC3 (RPC82).